The sequence spans 327 residues: Endo-1,4-beta-xylanase C (327 aa).

Residues 1–15 (MKFSSLLFTASLVAA) form the signal peptide. The region spanning 43 to 325 (TITDPNLLQS…KPAYTAVVNA (283 aa)) is the GH10 domain. Glu154 functions as the Proton donor in the catalytic mechanism. Glu262 functions as the Nucleophile in the catalytic mechanism. A disulfide bridge connects residues Cys280 and Cys286.

It belongs to the glycosyl hydrolase 10 (cellulase F) family.

It localises to the secreted. It carries out the reaction Endohydrolysis of (1-&gt;4)-beta-D-xylosidic linkages in xylans.. Its pathway is glycan degradation; xylan degradation. With respect to regulation, weakly inhibited by the wheat xylanase inhibiting protein I (XIP-I). In terms of biological role, endo-1,4-beta-xylanase involved in the hydrolysis of xylan, a major structural heterogeneous polysaccharide found in plant biomass representing the second most abundant polysaccharide in the biosphere, after cellulose. Plays an important role in causing fusarium head blight (FHB) on cereal crops. The sequence is that of Endo-1,4-beta-xylanase C (XYLC) from Gibberella zeae (strain ATCC MYA-4620 / CBS 123657 / FGSC 9075 / NRRL 31084 / PH-1) (Wheat head blight fungus).